A 344-amino-acid polypeptide reads, in one-letter code: DNA-directed RNA polymerase subunit alpha (344 aa).

The segment at 1 to 239 is alpha N-terminal domain (alpha-NTD); the sequence is MADHWNKLTR…DQLQSFISFD (239 aa). The alpha C-terminal domain (alpha-CTD) stretch occupies residues 254–344; the sequence is VLPYDHNLLR…ENLSKQYSED (91 aa).

The protein belongs to the RNA polymerase alpha chain family. Homodimer. The RNAP catalytic core consists of 2 alpha, 1 beta, 1 beta' and 1 omega subunit. When a sigma factor is associated with the core the holoenzyme is formed, which can initiate transcription.

It carries out the reaction RNA(n) + a ribonucleoside 5'-triphosphate = RNA(n+1) + diphosphate. In terms of biological role, DNA-dependent RNA polymerase catalyzes the transcription of DNA into RNA using the four ribonucleoside triphosphates as substrates. The chain is DNA-directed RNA polymerase subunit alpha from Anaplasma phagocytophilum (strain HZ).